A 147-amino-acid chain; its full sequence is MLCVDVNVLVYAHRADLREHADYRGLLERLANDDEPLGLPDSVLAGFIRVVTNRRVFTEPTSPQDAWQAVDALLAAPAAMRLRPGERHWMAFRQLASDVDANGNDIADAHLAAYALENNATWLSADRGFARFRRLRWRHPLDGQTHL.

Positions 3–139 constitute a PINc domain; the sequence is CVDVNVLVYA…ARFRRLRWRH (137 aa). 2 residues coordinate Mg(2+): Asp5 and Asp108.

It belongs to the PINc/VapC protein family. Mg(2+) serves as cofactor.

Functionally, toxic component of a type II toxin-antitoxin (TA) system. An RNase. Its toxic effect is neutralized by coexpression with cognate antitoxin VapB43. This Mycobacterium tuberculosis (strain CDC 1551 / Oshkosh) protein is Ribonuclease VapC43.